The sequence spans 296 residues: Sulfotransferase 1C2 (296 aa).

Lysine 49–tryptophan 54 is a 3'-phosphoadenylyl sulfate binding site. Arginine 107 to histidine 109 contacts substrate. Histidine 109 serves as the catalytic Proton acceptor. 3'-phosphoadenylyl sulfate is bound by residues arginine 131, serine 139, tyrosine 194, and threonine 228 to methionine 233. Serine 139 is subject to Phosphoserine. Position 254 is a phosphoserine (serine 254). Phenylalanine 256–glycine 260 serves as a coordination point for 3'-phosphoadenylyl sulfate.

The protein belongs to the sulfotransferase 1 family. In terms of tissue distribution, highly expressed in kidney and at lower levels in stomach and liver. More specifically found in the epithelia of proximal tubules of the kidney, of the bile duct, of the gastric mucosa, and in hepatocytes.

It localises to the cytoplasm. The protein localises to the lysosome. The protein resides in the mitochondrion. It catalyses the reaction a phenol + 3'-phosphoadenylyl sulfate = an aryl sulfate + adenosine 3',5'-bisphosphate + H(+). It carries out the reaction cholesterol + 3'-phosphoadenylyl sulfate = cholesterol sulfate + adenosine 3',5'-bisphosphate + H(+). Functionally, sulfotransferase that utilizes 3'-phospho-5'-adenylyl sulfate (PAPS) to catalyze the sulfate conjugation of phenolic compounds. Does not transfer sulfate to steroids, dopamine, acetaminophen, or alpha-naphthol. Except in mitochondria, where it can add sulfate to cholesterol producing cholesterol sulfate, which alters mitochondrial membrane organization, and impacts protein complex mobility increasing state-III respiration, thereby modulating mitochondrial respiration. Catalyzes the sulfation of the carcinogenic N-hydroxy-2-acetylaminofluorene leading to highly reactive intermediates capable of forming DNA adducts, potentially resulting in mutagenesis. This chain is Sulfotransferase 1C2 (Sult1c2), found in Rattus norvegicus (Rat).